The following is a 118-amino-acid chain: DNA-binding protein M164_1799 (118 aa).

It belongs to the PDCD5 family.

This is DNA-binding protein M164_1799 from Saccharolobus islandicus (strain M.16.4 / Kamchatka #3) (Sulfolobus islandicus).